The primary structure comprises 1121 residues: Myelin transcription factor 1 (1121 aa).

Disordered stretches follow at residues 1-156 (MSLE…SKGS) and 200-376 (EAAE…MTRG). The segment at 21–64 (PETTAADLSCPTPGCTGSGHVRGKYSRHRSLQSCPLAKKRKLEG) adopts a CCHHC-type 1 zinc-finger fold. Zn(2+)-binding residues include C30, C35, H48, and C54. Residues 41 to 50 (VRGKYSRHRS) show a composition bias toward basic residues. Composition is skewed to basic and acidic residues over residues 62 to 71 (LEGAEAEHLV) and 123 to 132 (DEIHRPETAE). The span at 147–156 (GSATASSKGS) shows a compositional bias: low complexity. The span at 258–308 (EEEDEEEEEEEEEEEEDEEEEEEEEEEEEEEEEEEEEEEEEEEEEEEEEAA) shows a compositional bias: acidic residues. Over residues 346–358 (VRSDDDKDEDTHS) the composition is skewed to basic and acidic residues. CCHHC-type zinc fingers lie at residues 433–476 (SRAE…PPEI) and 477–520 (LAMH…KLAK). Zn(2+) is bound by residues C442, C447, H460, C466, C486, C491, H504, and C510. Disordered regions lie at residues 517 to 540 (KLAK…SNSD) and 668 to 774 (TLDL…EERK). Positions 526–540 (QPQTGDPSKSSSNSD) are enriched in polar residues. The segment covering 705-723 (SSTSAPSSSMTSPQSSQAS) has biased composition (low complexity). Residues 724 to 733 (RQDEWDRPLD) are compositionally biased toward basic and acidic residues. Positions 759 to 770 (EADDQEVSEENF) are enriched in acidic residues. CCHHC-type zinc fingers lie at residues 791–834 (KDIK…LRNL), 835–878 (MAAH…GVKV), 884–927 (DKED…QKEG), and 937–980 (KSLK…GKKG). Residues C800, C805, H818, C824, C844, C849, H862, C868, C893, C898, H911, C917, C946, C951, H964, and C970 each contribute to the Zn(2+) site.

It belongs to the MYT1 family. As to quaternary structure, interacts with STEAP3. In terms of tissue distribution, mostly in developing nervous system. Expressed in neural progenitors and oligodendrocyte lineage cells. More highly expressed in oligodendrocyte progenitors than in differentiated oligodendrocytes.

It localises to the nucleus. Binds to the promoter region of genes encoding proteolipid proteins of the central nervous system. May play a role in the development of neurons and oligodendroglia in the CNS. May regulate a critical transition point in oligodendrocyte lineage development by modulating oligodendrocyte progenitor proliferation relative to terminal differentiation and up-regulation of myelin gene transcription. In Homo sapiens (Human), this protein is Myelin transcription factor 1 (MYT1).